A 93-amino-acid chain; its full sequence is N-acetyl-S-hydroxy-L-cysteine reductase (93 aa).

In terms of domain architecture, Glutaredoxin spans 1 to 93 (MSDVVNIVVW…NHAQIKEAKR (93 aa)). Cys-15 and Cys-18 are joined by a disulfide.

Belongs to the glutaredoxin family.

It catalyses the reaction N-acetyl-S-hydroxy-L-cysteine + AH2 = N-acetyl-L-cysteine + A + H2O. Its pathway is amino-acid metabolism. Functionally, involved in a cysteine salvage pathway from S-alkylcysteine. Catalyzes the reduction of N-acetyl-S-hydroxy-L-cysteine (N-acetyl-L-cysteine sulfenic acid) to N-acetyl-L-cysteine. This pathway is likely important in the catabolism of alkylated cysteine generated by proteolysis of alkylated glutathione formed in the detoxification of a wide range of electrophiles. The protein is N-acetyl-S-hydroxy-L-cysteine reductase of Bacillus subtilis (strain 168).